The primary structure comprises 336 residues: Protein SGT1 homolog (336 aa).

Ala2 is modified (N-acetylalanine). TPR repeat units lie at residues 11-44 (SQRLFQSFSDALIDGDPQAALEELTKALEQNPDD), 45-78 (AQYYCQRAYCHILLGKYRDGIADVKKSLELNPNN), and 79-112 (CTALLRKGICEYHEKDYASALETFAEGQKLDSTD). The region spanning 140-229 (QSKIKYDWYQ…PEAVRWEKLE (90 aa)) is the CS domain. At Thr236 the chain carries Phosphothreonine. In terms of domain architecture, SGS spans 247–336 (MYPSSSHYTR…PPDDMEWKQY (90 aa)). A Phosphoserine modification is found at Ser252. Phosphothreonine is present on Thr255. A Glycyl lysine isopeptide (Lys-Gly) (interchain with G-Cter in SUMO1); alternate cross-link involves residue Lys266. Residue Lys266 forms a Glycyl lysine isopeptide (Lys-Gly) (interchain with G-Cter in SUMO2); alternate linkage. Ser302 is subject to Phosphoserine.

It belongs to the SGT1 family. As to quaternary structure, probably associates with SCF (SKP1-CUL1-F-box protein) complex through interaction with SKP1. Interacts with S100A6. Interacts with HSP90. Phosphorylated at Ser-252 and Ser-302, dephosphorylation promotes nuclear translocation, most likely due to disruption of the SUGT1-HSP90 complex.

Its subcellular location is the cytoplasm. It localises to the nucleus. In terms of biological role, may play a role in ubiquitination and subsequent proteasomal degradation of target proteins. The protein is Protein SGT1 homolog of Mus musculus (Mouse).